Reading from the N-terminus, the 111-residue chain is MSFSECPLVISACKKFLQKRITIENEALINALITALAQTNTLNDLCLLPIQTYLLSYKNAFEWIHFVCIAITTILDSKYNWKDCTVDINYIFLHVTYIYTIKTKEYLDYCS.

This sequence belongs to the asfivirus E111R family.

This is an uncharacterized protein from Ornithodoros (relapsing fever ticks).